Consider the following 660-residue polypeptide: Acetyl-coenzyme A synthetase (660 aa).

CoA is bound by residues 197–200 (RGGK) and threonine 317. Residues 397–399 (GEP), 421–426 (DTFWQT), aspartate 512, and arginine 528 contribute to the ATP site. Residue serine 536 participates in CoA binding. ATP is bound at residue arginine 539. 2 residues coordinate Mg(2+): valine 550 and valine 555. Lysine 625 is subject to N6-acetyllysine.

It belongs to the ATP-dependent AMP-binding enzyme family. Requires Mg(2+) as cofactor. Post-translationally, acetylated. Deacetylation by the SIR2-homolog deacetylase activates the enzyme.

The catalysed reaction is acetate + ATP + CoA = acetyl-CoA + AMP + diphosphate. Catalyzes the conversion of acetate into acetyl-CoA (AcCoA), an essential intermediate at the junction of anabolic and catabolic pathways. AcsA undergoes a two-step reaction. In the first half reaction, AcsA combines acetate with ATP to form acetyl-adenylate (AcAMP) intermediate. In the second half reaction, it can then transfer the acetyl group from AcAMP to the sulfhydryl group of CoA, forming the product AcCoA. This Herminiimonas arsenicoxydans protein is Acetyl-coenzyme A synthetase.